The chain runs to 379 residues: Probable tRNA sulfurtransferase (379 aa).

Positions 52–157 (DEFLDKLKFI…RHHAFVFCKI (106 aa)) constitute a THUMP domain. Residues 175 to 176 (LL), Arg-257, Gly-279, and Gln-288 each bind ATP.

Belongs to the ThiI family.

The protein localises to the cytoplasm. It catalyses the reaction [ThiI sulfur-carrier protein]-S-sulfanyl-L-cysteine + a uridine in tRNA + 2 reduced [2Fe-2S]-[ferredoxin] + ATP + H(+) = [ThiI sulfur-carrier protein]-L-cysteine + a 4-thiouridine in tRNA + 2 oxidized [2Fe-2S]-[ferredoxin] + AMP + diphosphate. It carries out the reaction [ThiS sulfur-carrier protein]-C-terminal Gly-Gly-AMP + S-sulfanyl-L-cysteinyl-[cysteine desulfurase] + AH2 = [ThiS sulfur-carrier protein]-C-terminal-Gly-aminoethanethioate + L-cysteinyl-[cysteine desulfurase] + A + AMP + 2 H(+). Its pathway is cofactor biosynthesis; thiamine diphosphate biosynthesis. Catalyzes the ATP-dependent transfer of a sulfur to tRNA to produce 4-thiouridine in position 8 of tRNAs, which functions as a near-UV photosensor. Also catalyzes the transfer of sulfur to the sulfur carrier protein ThiS, forming ThiS-thiocarboxylate. This is a step in the synthesis of thiazole, in the thiamine biosynthesis pathway. The sulfur is donated as persulfide by IscS. The protein is Probable tRNA sulfurtransferase of Mycoplasmopsis pulmonis (strain UAB CTIP) (Mycoplasma pulmonis).